The following is a 44-amino-acid chain: Thioredoxin (44 aa).

One can recognise a Thioredoxin domain in the interval 2–44; sequence IELDKSNFEEEVLKAEGTVLVDFWSPSCEPCKALMPHVHDFEE. An intrachain disulfide couples cysteine 29 to cysteine 32.

The protein belongs to the thioredoxin family.

Functionally, participates in various redox reactions through the reversible oxidation of its active center dithiol to a disulfide and catalyzes dithiol-disulfide exchange reactions. This chain is Thioredoxin (trxA), found in Tissierella creatinophila.